A 1782-amino-acid polypeptide reads, in one-letter code: MAQQQQQQHQQQQHHQQQQQLLLQQQQQLLQYNNNLYNLNYNMEDNERRKRREREKYERQQGIQSDDRETSLFGEPRRLNPSEGDAEITAALGEFIDARDHMNSSTVGIYRHASTNASSSRLPALSFGGSSLANSYSTSSASVNPAASLASSSASVPGQLPTSQQQQQQQQQQQHYQQQQRAPTYLKQADNKPPYNGRGGYPGQPMKNDIPSSSGMAPPRGPPRSSSSASQSNSNSNSINSSSATNNATSGATSASMSSPLGPPLSTQMPNGREKSFLGPPAPALPNGGRFVPPAASSKRPSNSVGLQPPPPEKDISKIITEMTNNYRVTPLTSIAATPHAPMSENYNLNGPNKFKYAFDSIGPLNSPPAAGASSLMTPLLAPIAPITSPIAPLLTTPPQASQLPLPLAPLAGATTVPPALGGMAAVAPIQQLMPTPPKASPTPPAIKPMKTEKNHSLEKQDSCLENDLELSESDDERKKEGRSAGNSSNSSESDSSESGSEASSKGDTQQQQQQQQQQQQQQLLLQQQQQQQLLLQQQQQRLAASANGSKKKYSQTIIASGANTISGLLTSSGLGGAGAGSVAGGAGGAGGAINATNNTCGGGGGSSGSCMGTMSSSSSSNKTPSPTDSNRWNLSRFFPKPANQTAAESVSPGVANAIGNVSMKVPGILPGGAQIIPESIDVTTAIVKNEKLHDEPRHVGDDEDDEADEQHRQQQQQQQQQQQQQQQQQRYGLSVTVKKEQLEQQQQQQLLLQQQQQLTTEQLALAGALPKNQIKRESRLSDSGSASSGSGSGSSSSDSAGGSSEVLQMPGPGETLQIPGVPAAITTVLRVPQAMQHKVQPNSVTLTPIGPLPASPKPRQKKPRKKKMSAATAPLDSSDEDEPTASSNKKHALELAATAAAAAAAVAVPVAAAAAPAIKKGRGRPRKQAQQQQQQQQQQLQQSGNLSSASASSSQAKGPTLTAAKKPLAKASVSNSNSTAPATVAAGTRKREHSSNSSSNSNTPTKKPTATFATMAAKLDRADALSSDDDSSSSSSCSSTKSSSSSGSDSETPAAAAAGAAASTATTVVTTSAQNPAKKRIVKINKVGVAGNSSSSSKAKRRYSVGSSSNSSSSSETEEQQQHKQQQLLLLQQQQQKQQLQHQQQLQQQQQQQQSLLGQFAAESLPQSAQRLSSSDCSSSSNSDSSSNSSGSSSSSDEDGEHRSGKRKSDKKKICTLTRIFNPKEGGAKKQGQVVIIDQSEEQQQQQQQQQQQAKELKPRATPTQLLGATLASPARTTTPHLTSLMCKIDLSKLARQHHHQPERLKAQQNGHLSSRSAEGARTPKDLQQICTPNGYVGGAAGGGAAASKLLGGVKHEHGVKPEPELEPGYEGKYKLNSVKQEFMLKQELPARRRKRSSSSSSSPYKEKKRKKEKAEQLSKELLPVPVLLPANNHERLSRDKLELLMQQQESAANGSPNKLQQQQQQSRLSQSQQQQQQQQQQQSLSQSTTAAATVAAAPIQLPTTCSEAVQTTPPPAAPQPEPRLIYRSHFDKEEENENDDLRKNDFLLQEAIRRKRAADSERDSFSQMTLYLEAIVYFLLTADAMERCNMEATWTMYKDTLSLIKYISSKNRPYQLSTNGNHESHNIVAILSLRCQSLISLKLYKLRRVNCRAIIASCTEFFRSGRGDILNGNTPSSISPSNSVGSQGSGSNTPPGKIVPQDIHNMLCKQNEYLTYVNSAHELWDQADRLVRNGNHIDFIRKLDHENGPLTLHSTMHEVFRYVQAGLKTLRDAVSYPQSQ.

Disordered stretches follow at residues 42–84 (NMED…PSEG), 150–313 (ASSS…PPPE), 434–515 (MPTP…QQQQ), 605–637 (GGSS…NLSR), 691–732 (EKLH…QQRY), 768–820 (GALP…LQIP), 839–891 (KVQP…SNKK), 911–1064 (VAAA…AAAS), 1091–1126 (AGNS…QHKQ), 1166–1234 (LPQS…KQGQ), 1296–1327 (ARQH…TPKD), 1386–1420 (LKQE…EQLS), 1450–1484 (QESA…QQQQ), and 1674–1701 (GNTP…GKIV). The segment covering 54–80 (REKYERQQGIQSDDRETSLFGEPRRLN) has biased composition (basic and acidic residues). 2 stretches are compositionally biased toward low complexity: residues 164–180 (QQQQ…QQQQ) and 211–260 (PSSS…MSSP). Over residues 435-447 (PTPPKASPTPPAI) the composition is skewed to pro residues. Threonine 443 is modified (phosphothreonine). Residues 450-463 (MKTEKNHSLEKQDS) show a composition bias toward basic and acidic residues. Acidic residues predominate over residues 465–475 (LENDLELSESD). Residues serine 472 and serine 474 each carry the phosphoserine modification. Low complexity-rich tracts occupy residues 484 to 515 (SAGN…QQQQ) and 609 to 622 (GSCM…SSSN). The span at 623–634 (KTPSPTDSNRWN) shows a compositional bias: polar residues. A compositionally biased stretch (basic and acidic residues) spans 691–701 (EKLHDEPRHVG). 2 stretches are compositionally biased toward low complexity: residues 714 to 730 (QQQQ…QQQQ) and 782 to 805 (SDSG…GGSS). The segment covering 859-869 (PRQKKPRKKKM) has biased composition (basic residues). Phosphoserine occurs at positions 878 and 879. The a.T hook DNA-binding region spans 920–932 (KKGRGRPRKQAQQ). The span at 929–972 (QAQQQQQQQQQQLQQSGNLSSASASSSQAKGPTLTAAKKPLAKA) shows a compositional bias: low complexity. 2 positions are modified to phosphoserine: serine 949 and serine 951. Residues 973 to 982 (SVSNSNSTAP) are compositionally biased toward polar residues. Low complexity-rich tracts occupy residues 996–1018 (SNSS…TMAA), 1033–1064 (SSSS…AAAS), 1105–1116 (SVGSSSNSSSSS), and 1174–1196 (SSSD…SSSS). Positions 1308-1318 (AQQNGHLSSRS) are enriched in polar residues. Residues 1450-1460 (QESAANGSPNK) show a composition bias toward polar residues. The residue at position 1457 (serine 1457) is a Phosphoserine. Low complexity-rich tracts occupy residues 1461–1484 (LQQQ…QQQQ) and 1674–1694 (GNTP…SGSN).

This sequence belongs to the AF4 family.

The protein resides in the nucleus. Has a role in transcriptional regulation. Acts in parallel with the Ras/MAPK and the PI3K/PKB pathways in the control of cell identity and cellular growth. Essential for regulation of the cytoskeleton and cell growth but not for cell proliferation or growth rate. Required specifically for the microtubule-based basal transport of lipid droplets. Plays a partially redundant function downstream of Raf in cell fate specification in the developing eye. Pair-rule protein that regulates embryonic cellularization, gastrulation and segmentation. In Drosophila mojavensis (Fruit fly), this protein is AF4/FMR2 family member lilli.